The chain runs to 89 residues: Small ribosomal subunit protein uS15 (89 aa).

This sequence belongs to the universal ribosomal protein uS15 family. In terms of assembly, part of the 30S ribosomal subunit. Forms a bridge to the 50S subunit in the 70S ribosome, contacting the 23S rRNA.

Functionally, one of the primary rRNA binding proteins, it binds directly to 16S rRNA where it helps nucleate assembly of the platform of the 30S subunit by binding and bridging several RNA helices of the 16S rRNA. Forms an intersubunit bridge (bridge B4) with the 23S rRNA of the 50S subunit in the ribosome. This chain is Small ribosomal subunit protein uS15, found in Buchnera aphidicola subsp. Cinara cedri (strain Cc).